The chain runs to 688 residues: G protein-coupled receptor kinase 3 (688 aa).

An N-terminal region spans residues 1–190 (MADLEAVLAD…ELNIHLSMND (190 aa)). In terms of domain architecture, RGS spans 54–175 (TFDKIFNQKI…MESDKFTRFC (122 aa)). Residues 191-453 (FSVHRIIGRG…ARELKEHIFF (263 aa)) form the Protein kinase domain. Residues 197-205 (IGRGGFGEV) and K220 contribute to the ATP site. Residue D317 is the Proton acceptor of the active site. Positions 454–521 (KGIDWQHVYL…VISERWQQEV (68 aa)) constitute an AGC-kinase C-terminal domain. The region spanning 558–652 (DCIMHGYMLK…WLKELTCTFN (95 aa)) is the PH domain.

It belongs to the protein kinase superfamily. AGC Ser/Thr protein kinase family. GPRK subfamily. As to quaternary structure, interacts with GIT1. Post-translationally, ubiquitinated.

It is found in the postsynapse. It localises to the presynapse. It catalyses the reaction [beta-adrenergic receptor] + ATP = [beta-adrenergic receptor]-phosphate + ADP + H(+). In terms of biological role, specifically phosphorylates the agonist-occupied form of the beta-adrenergic and closely related receptors. In Mus musculus (Mouse), this protein is G protein-coupled receptor kinase 3.